Here is a 388-residue protein sequence, read N- to C-terminus: Na(+)/H(+) antiporter NhaA (388 aa).

11 consecutive transmembrane segments (helical) span residues 14 to 34, 59 to 79, 95 to 115, 125 to 145, 154 to 174, 179 to 199, 219 to 239, 254 to 274, 292 to 312, 328 to 348, and 356 to 376; these read GGII…MGAT, MLLW…GLEV, VFPV…YLAF, GWAI…ALLG, IFLM…IALF, LSIV…LLNL, VLKS…FIPL, ILHP…NAGV, IIAG…WLAL, IMAV…IASL, and ALIN…AVVG.

This sequence belongs to the NhaA Na(+)/H(+) (TC 2.A.33) antiporter family.

It is found in the cell inner membrane. The catalysed reaction is Na(+)(in) + 2 H(+)(out) = Na(+)(out) + 2 H(+)(in). Functionally, na(+)/H(+) antiporter that extrudes sodium in exchange for external protons. The protein is Na(+)/H(+) antiporter NhaA of Salmonella arizonae (strain ATCC BAA-731 / CDC346-86 / RSK2980).